Here is a 475-residue protein sequence, read N- to C-terminus: Aspartyl/glutamyl-tRNA(Asn/Gln) amidotransferase subunit B (475 aa).

The protein belongs to the GatB/GatE family. GatB subfamily. In terms of assembly, heterotrimer of A, B and C subunits.

It carries out the reaction L-glutamyl-tRNA(Gln) + L-glutamine + ATP + H2O = L-glutaminyl-tRNA(Gln) + L-glutamate + ADP + phosphate + H(+). It catalyses the reaction L-aspartyl-tRNA(Asn) + L-glutamine + ATP + H2O = L-asparaginyl-tRNA(Asn) + L-glutamate + ADP + phosphate + 2 H(+). Functionally, allows the formation of correctly charged Asn-tRNA(Asn) or Gln-tRNA(Gln) through the transamidation of misacylated Asp-tRNA(Asn) or Glu-tRNA(Gln) in organisms which lack either or both of asparaginyl-tRNA or glutaminyl-tRNA synthetases. The reaction takes place in the presence of glutamine and ATP through an activated phospho-Asp-tRNA(Asn) or phospho-Glu-tRNA(Gln). This is Aspartyl/glutamyl-tRNA(Asn/Gln) amidotransferase subunit B from Hydrogenovibrio crunogenus (strain DSM 25203 / XCL-2) (Thiomicrospira crunogena).